A 201-amino-acid polypeptide reads, in one-letter code: Superoxide dismutase [Mn] (201 aa).

Mn(2+)-binding residues include histidine 27, histidine 81, aspartate 163, and histidine 167.

This sequence belongs to the iron/manganese superoxide dismutase family. Homodimer. The cofactor is Mn(2+).

The protein localises to the secreted. It carries out the reaction 2 superoxide + 2 H(+) = H2O2 + O2. Destroys superoxide anion radicals which are normally produced within the cells and which are toxic to biological systems. This is Superoxide dismutase [Mn] (sodA) from Streptococcus pyogenes serotype M18 (strain MGAS8232).